Consider the following 113-residue polypeptide: U11-theraphotoxin-Hhn1h (113 aa).

Residues 1-21 (MNTVRVTFLLVFVLVVSLGQA) form the signal peptide. A propeptide spanning residues 22–74 (DKDENRMEMQEKTEQGKSYLDFAENLLLQKLEELEAKLLEEDSEESRNSRQKR) is cleaved from the precursor. The disordered stretch occupies residues 61–83 (EEDSEESRNSRQKRRIGEGVPCD). Intrachain disulfides connect Cys82–Cys95 and Cys89–Cys110.

This sequence belongs to the neurotoxin 14 (magi-1) family. 01 (HNTX-16) subfamily. In terms of tissue distribution, expressed by the venom gland.

It localises to the secreted. Probable ion channel inhibitor. In Cyriopagopus hainanus (Chinese bird spider), this protein is U11-theraphotoxin-Hhn1h.